Consider the following 296-residue polypeptide: CTD kinase subunit gamma (296 aa).

The disordered stretch occupies residues 25–44; sequence RDSITSSSTTTPPSSQQKLN. Low complexity predominate over residues 29–39; that stretch reads TSSSTTTPPSS. Thr-35 is subject to Phosphothreonine.

This sequence belongs to the CTK3 family. As to quaternary structure, CTDK-I consists of three subunits, CTK1, CTK2 and CTK3 (also called alpha, beta and gamma). Interacts with CTK1. Heterodimerization with CTK2 is required to protect this subunit from degradation. Post-translationally, ubiquitinated. Ubiquitination leads to degradation by the 26S proteasome pathway.

The protein localises to the nucleus. The protein resides in the nucleolus. It localises to the cytoplasm. Gamma subunit of the CTDK-I complex, which hyperphosphorylates the C-terminal heptapeptide repeat domain (CTD) of the largest RNA polymerase II subunit. CTDK-I phosphorylates 'Ser-5' if the CTD substrate is not phosphorylated at 'Ser-5', but will phosphorylate 'Ser-2' of a CTD substrate if 'Ser-5' is already phosphorylated. CTDK-I is also more reactive toward substrates that are prephosphorylated at 'Ser-2' or 'Ser-5' compared with an unphosphorylated CTD substrate, therefore efficiently creating doubly phosphorylated CTD repeats. Involved in RNA polymerase I transcription and RNA polymerase II transcriptional elongation, and as part of the CTDK-I complex, pre-mRNA 3'-end processing and SET2 mediated H3K36 methylation. Together with CTK2, required for CTK1 CTD kinase activation. Required for DNA damage induced transcription. Involved in the adaptation to alternative carbon sources, including galactose, glycerol and ethanol, but not raffinose. Required for the integrity of the rDNA locus. This Saccharomyces cerevisiae (strain ATCC 204508 / S288c) (Baker's yeast) protein is CTD kinase subunit gamma (CTK3).